The primary structure comprises 273 residues: tRNA pseudouridine synthase B (273 aa).

Aspartate 38 serves as the catalytic Nucleophile.

It belongs to the pseudouridine synthase TruB family. Type 1 subfamily.

The enzyme catalyses uridine(55) in tRNA = pseudouridine(55) in tRNA. In terms of biological role, responsible for synthesis of pseudouridine from uracil-55 in the psi GC loop of transfer RNAs. This is tRNA pseudouridine synthase B from Campylobacter curvus (strain 525.92).